A 380-amino-acid chain; its full sequence is Queuine tRNA-ribosyltransferase (380 aa).

D96 acts as the Proton acceptor in catalysis. Substrate contacts are provided by residues 96–100, D150, Q193, and G220; that span reads DSGGF. Residues 251-257 form an RNA binding region; it reads GVGAPDS. D270 acts as the Nucleophile in catalysis. The tract at residues 275 to 279 is RNA binding; important for wobble base 34 recognition; the sequence is TRIAR. Positions 308, 310, 313, and 339 each coordinate Zn(2+).

The protein belongs to the queuine tRNA-ribosyltransferase family. In terms of assembly, homodimer. Within each dimer, one monomer is responsible for RNA recognition and catalysis, while the other monomer binds to the replacement base PreQ1. It depends on Zn(2+) as a cofactor.

It carries out the reaction 7-aminomethyl-7-carbaguanine + guanosine(34) in tRNA = 7-aminomethyl-7-carbaguanosine(34) in tRNA + guanine. Its pathway is tRNA modification; tRNA-queuosine biosynthesis. Functionally, catalyzes the base-exchange of a guanine (G) residue with the queuine precursor 7-aminomethyl-7-deazaguanine (PreQ1) at position 34 (anticodon wobble position) in tRNAs with GU(N) anticodons (tRNA-Asp, -Asn, -His and -Tyr). Catalysis occurs through a double-displacement mechanism. The nucleophile active site attacks the C1' of nucleotide 34 to detach the guanine base from the RNA, forming a covalent enzyme-RNA intermediate. The proton acceptor active site deprotonates the incoming PreQ1, allowing a nucleophilic attack on the C1' of the ribose to form the product. After dissociation, two additional enzymatic reactions on the tRNA convert PreQ1 to queuine (Q), resulting in the hypermodified nucleoside queuosine (7-(((4,5-cis-dihydroxy-2-cyclopenten-1-yl)amino)methyl)-7-deazaguanosine). The sequence is that of Queuine tRNA-ribosyltransferase from Streptococcus equi subsp. zooepidemicus (strain H70).